Reading from the N-terminus, the 232-residue chain is Small ribosomal subunit protein uS2 (232 aa).

This sequence belongs to the universal ribosomal protein uS2 family.

The protein is Small ribosomal subunit protein uS2 of Heliobacterium modesticaldum (strain ATCC 51547 / Ice1).